A 1045-amino-acid chain; its full sequence is Extracellular serine protease (1045 aa).

An N-terminal signal peptide occupies residues 1–27 (MILNKRLKLAYCVFLGCYGLSIHSSLA). The Peptidase S8 domain maps to 49-397 (QWGLEAISAE…WGRVNLRDAI (349 aa)). Residues D76, H112, and S341 each act as charge relay system in the active site. A propeptide spans 646-1045 (SLASTENEKA…SVNAGLTWRF (400 aa)) (translocator domain; removed in mature form). An Autotransporter domain is found at 769 to 1045 (IKADDNGAWA…SVNAGLTWRF (277 aa)).

The protein belongs to the peptidase S8 family.

The protein resides in the secreted. The chain is Extracellular serine protease from Serratia marcescens.